Consider the following 442-residue polypeptide: MSDTIAAIATAHGVGSISIVRLSGERALEFALKLSHKTKLTPRHATFTKLFNQNNEIIDEAIMIYFKAPYSFTGEDIVEFQTHGGFSVSEVLLEELVSLGARLALAGEFSKRACLNGKMTPLKALNIQDLILSKSALAAKIIARNMQGNLGELLEKIRTDLVKTLAFVETSIDYADDDLPSDLLEQISTMCEENSKILKEIYTLSQSKKGLIEGFKIAIVGKPNVGKSSLLNALLSYERAIVSDIAGTTRDTIEENFKLGTHLLRIIDTAGIRESKDVIEQIGVALSKKSLEDADIILAVFDASRVQDKEDEKIFDLLANTDKKIFWILNKSDLENVFKNTQNKNFIKLSAQKDITLLKEELQNYLNSFDSEGIMVSSLDLINACKISSEAIFRAKGLLEESSLEFFAFELNLAINELARFTKDFQRDEILDEMFGNFCLGK.

3 residues coordinate (6S)-5-formyl-5,6,7,8-tetrahydrofolate: Arg-21, Glu-79, and Lys-118. The 154-residue stretch at 214-367 folds into the TrmE-type G domain; it reads GFKIAIVGKP…LKEELQNYLN (154 aa). Position 224 (Asn-224) interacts with K(+). GTP-binding positions include 224 to 229, 243 to 249, and 268 to 271; these read NVGKSS, SDIAGTT, and DTAG. Residue Ser-228 participates in Mg(2+) binding. K(+)-binding residues include Ser-243, Ile-245, and Thr-248. Thr-249 lines the Mg(2+) pocket. Residue Lys-442 participates in (6S)-5-formyl-5,6,7,8-tetrahydrofolate binding.

The protein belongs to the TRAFAC class TrmE-Era-EngA-EngB-Septin-like GTPase superfamily. TrmE GTPase family. Homodimer. Heterotetramer of two MnmE and two MnmG subunits. It depends on K(+) as a cofactor.

The protein localises to the cytoplasm. Its function is as follows. Exhibits a very high intrinsic GTPase hydrolysis rate. Involved in the addition of a carboxymethylaminomethyl (cmnm) group at the wobble position (U34) of certain tRNAs, forming tRNA-cmnm(5)s(2)U34. The polypeptide is tRNA modification GTPase MnmE (Campylobacter jejuni subsp. jejuni serotype O:2 (strain ATCC 700819 / NCTC 11168)).